A 643-amino-acid chain; its full sequence is MVHNISLSSRKALHNVHLPYMVQLPKPTGYNVALKNAAEGYDKARRMVAWLYDIADYESSIPQTFTLQQKTDKYTWELSDNFPPHLAVVPPDQSVSAPSIFSPVRLAQTLLIMSSLWYDDHTDLAPGPEQNTMQKLTQWNQERHKDQGWLIKDMFNAPNIGLRNDWYTDEVFAQQFFTGPNSTTITLASDVWLTAFTSEAKAQGKDKVIALFESAPPNSFYVQDFSDFRRRMGAKPDEELFNDSDGAMRYGCAAVALFYLTAMGKLHPLAIIPDYKGSMAASVTIFNKRTNPLDISVNQANDWPWRYAKTCVLSSDWALHEMIIHLNNTHLVEEAVIVAAQRKLSPSHIVFRLLEPHWVVTLSLNALARSVLIPEVIVPIAGFSAPHIFQFIRESFTNFDWKSLYVPADLESRGFPVDQLNSPKFHNYAYARDINDMWTTLKKFVSSVLQDAQYYPDDASVAGDTQIQAWCDEMRSGMGAGMTNFPESITTVDDLVNMVTMCIHIAAPQHTAVNYLQQYYQTFVPNKPSALFSPLPTSIAQLQKYTESDLMAALPLNAKRQWLLMAQIPYLLSMQVQEDENIVTYAANASTDKDPIIASAGRQLAADLKKLAAVFLVNSAQLDDQNTPYDVLAPEQLANAIVI.

Residues 166–643 (WYTDEVFAQQ…PEQLANAIVI (478 aa)) enclose the Lipoxygenase domain. The Mn(2+) site is built by His-325, His-330, His-510, Asn-514, and Ile-643.

This sequence belongs to the lipoxygenase family. Requires Mn(2+) as cofactor.

It carries out the reaction (9Z,12Z)-octadecadienoate + O2 = (13S)-hydroperoxy-(9Z,11E)-octadecadienoate. In terms of biological role, lipoxygenase that metabolizes linoleic and alpha-linolenic acids to 13S-hydroperoxy fatty acids. This chain is Manganese lipoxygenase, found in Pleurotus sapidus (Oyster mushroom).